Reading from the N-terminus, the 130-residue chain is Small ribosomal subunit protein uS8 (130 aa).

The protein belongs to the universal ribosomal protein uS8 family. In terms of assembly, part of the 30S ribosomal subunit.

In terms of biological role, one of the primary rRNA binding proteins, it binds directly to 16S rRNA central domain where it helps coordinate assembly of the platform of the 30S subunit. The protein is Small ribosomal subunit protein uS8 of Pyrobaculum neutrophilum (strain DSM 2338 / JCM 9278 / NBRC 100436 / V24Sta) (Thermoproteus neutrophilus).